We begin with the raw amino-acid sequence, 398 residues long: Rhizopuspepsin-4 (398 aa).

Positions 1–21 (MKFTLISSCVALACMALAVEA) are cleaved as a signal peptide. The propeptide at 22 to 74 (APSGKKINVPLSKNANYKPNAKRAIEKANAKYARFRSSSSSSSSSSCGSAGTE) is activation peptide. Positions 58–78 (SSSSSSSSSSCGSAGTESSGS) are enriched in low complexity. The disordered stretch occupies residues 58 to 83 (SSSSSSSSSSCGSAGTESSGSVPVTD). The Peptidase A1 domain maps to 90–394 (YYGEVTVGTP…NPQVPQVQIA (305 aa)). Aspartate 108 is an active-site residue. Cysteine 121 and cysteine 124 are oxidised to a cystine. The active site involves aspartate 291. Cysteine 325 and cysteine 358 are joined by a disulfide.

This sequence belongs to the peptidase A1 family.

The catalysed reaction is Hydrolysis of proteins with broad specificity similar to that of pepsin A, preferring hydrophobic residues at P1 and P1'. Clots milk and activates trypsinogen. Does not cleave 4-Gln-|-His-5, but does cleave 10-His-|-Leu-11 and 12-Val-|-Glu-13 in B chain of insulin.. This is Rhizopuspepsin-4 from Rhizopus niveus.